Here is a 107-residue protein sequence, read N- to C-terminus: Urease subunit beta (107 aa).

It belongs to the urease beta subunit family. Heterotrimer of UreA (gamma), UreB (beta) and UreC (alpha) subunits. Three heterotrimers associate to form the active enzyme.

Its subcellular location is the cytoplasm. The enzyme catalyses urea + 2 H2O + H(+) = hydrogencarbonate + 2 NH4(+). It participates in nitrogen metabolism; urea degradation; CO(2) and NH(3) from urea (urease route): step 1/1. The chain is Urease subunit beta from Bacillus sp. (strain TB-90).